Consider the following 37-residue polypeptide: Large ribosomal subunit protein bL36B (37 aa).

This sequence belongs to the bacterial ribosomal protein bL36 family.

The sequence is that of Large ribosomal subunit protein bL36B from Paenarthrobacter aurescens (strain TC1).